Here is a 395-residue protein sequence, read N- to C-terminus: Acetate kinase (395 aa).

Residue Asn-7 coordinates Mg(2+). Lys-14 serves as a coordination point for ATP. Arg-92 is a substrate binding site. The active-site Proton donor/acceptor is Asp-149. Residues 207–211 (HLGNG), 282–284 (DMR), and 329–333 (GIGEN) each bind ATP. Glu-382 is a binding site for Mg(2+).

It belongs to the acetokinase family. In terms of assembly, homodimer. The cofactor is Mg(2+). Mn(2+) serves as cofactor.

The protein resides in the cytoplasm. It catalyses the reaction acetate + ATP = acetyl phosphate + ADP. It participates in metabolic intermediate biosynthesis; acetyl-CoA biosynthesis; acetyl-CoA from acetate: step 1/2. In terms of biological role, catalyzes the formation of acetyl phosphate from acetate and ATP. Can also catalyze the reverse reaction. This is Acetate kinase from Brachyspira hyodysenteriae (strain ATCC 49526 / WA1).